Reading from the N-terminus, the 91-residue chain is Elongation factor 1-beta (91 aa).

The protein belongs to the EF-1-beta/EF-1-delta family.

In terms of biological role, promotes the exchange of GDP for GTP in EF-1-alpha/GDP, thus allowing the regeneration of EF-1-alpha/GTP that could then be used to form the ternary complex EF-1-alpha/GTP/AAtRNA. This Sulfurisphaera tokodaii (strain DSM 16993 / JCM 10545 / NBRC 100140 / 7) (Sulfolobus tokodaii) protein is Elongation factor 1-beta.